Consider the following 544-residue polypeptide: Probable protein kinase UbiB (544 aa).

One can recognise a Protein kinase domain in the interval 123 to 501 (DFDIKPLASA…KRQQGTGKFL (379 aa)). ATP-binding positions include 129 to 137 (LASASIAQV) and Lys152. The Proton acceptor role is filled by Asp287. 2 helical membrane-spanning segments follow: residues 496–516 (GTGK…AIWI) and 519–539 (QLEP…LLSW).

The protein belongs to the ABC1 family. UbiB subfamily.

The protein resides in the cell inner membrane. The protein operates within cofactor biosynthesis; ubiquinone biosynthesis [regulation]. Its function is as follows. Is probably a protein kinase regulator of UbiI activity which is involved in aerobic coenzyme Q (ubiquinone) biosynthesis. The protein is Probable protein kinase UbiB of Vibrio cholerae serotype O1 (strain ATCC 39315 / El Tor Inaba N16961).